The chain runs to 183 residues: Archaemetzincin (183 aa).

Residue His-131 participates in Zn(2+) binding. The Proton acceptor role is filled by Glu-132. 6 residues coordinate Zn(2+): His-135, His-141, Cys-142, Cys-147, Cys-166, and Cys-169.

Belongs to the peptidase M54 family. In terms of assembly, monomer. Zn(2+) serves as cofactor.

Functionally, probable zinc metalloprotease whose natural substrate is unknown. The chain is Archaemetzincin from Saccharolobus islandicus (strain L.S.2.15 / Lassen #1) (Sulfolobus islandicus).